The sequence spans 567 residues: Geraniol synthase, chloroplastic (567 aa).

A chloroplast-targeting transit peptide spans 1-63; the sequence is MSCARITVTL…GDNSQRKNTR (63 aa). The interval 48–75 is disordered; that stretch reads STPLINGDNSQRKNTRQHMEESSSKRRE. The segment covering 64–75 has biased composition (basic and acidic residues); that stretch reads QHMEESSSKRRE. Positions 286, 323, 327, 466, and 469 each coordinate (2E)-geranyl diphosphate. Residues Asp-323 and Asp-327 each coordinate Mn(2+). The DDXXD motif motif lies at 323-327; it reads DDIFD. Mn(2+) contacts are provided by Asp-469, Thr-473, and Glu-477.

This sequence belongs to the terpene synthase family. Tpsb subfamily. As to quaternary structure, homodimer. It depends on Mn(2+) as a cofactor. Expressed in the peltate glandular trichomes of the leaves.

It is found in the plastid. It localises to the chloroplast. The catalysed reaction is (2E)-geranyl diphosphate + H2O = (2E)-geraniol + diphosphate. It functions in the pathway secondary metabolite biosynthesis; terpenoid biosynthesis. Functionally, monoterpene synthase that catalyzes the formation of geraniol from geranyl diphosphate. This is Geraniol synthase, chloroplastic (GES) from Ocimum basilicum (Sweet basil).